Reading from the N-terminus, the 252-residue chain is uncharacterized protein (252 aa).

In terms of domain architecture, Clp R spans 96-238; that stretch reads FRRFTPRARN…ITTLASLTGA (143 aa). Repeat regions lie at residues 99-164 and 172-238; these read FTPR…PAVT and FSGP…LTGA.

Belongs to the ClpA/ClpB family. ClpC subfamily.

This is an uncharacterized protein from Mycobacterium bovis (strain ATCC BAA-935 / AF2122/97).